A 532-amino-acid polypeptide reads, in one-letter code: Copalyl diphosphate synthase (532 aa).

A DXDDTA motif motif is present at residues 313–318; sequence DTDDTA. The short motif at 443–449 is the QXXDGSW motif element; that stretch reads QSDDGSW.

The protein belongs to the terpene synthase family. It depends on Mg(2+) as a cofactor.

The catalysed reaction is (2E,6E,10E)-geranylgeranyl diphosphate = (+)-copalyl diphosphate. Its function is as follows. Involved in the biosynthesis of the mercapturic acid derivative diterpene cyslabdan A, a potentiator of the beta-lactam antibiotic imipenem. Catalyzes the conversion of geranylgeranyl diphosphate (GGDP) into (+)-copalyl diphosphate. This chain is Copalyl diphosphate synthase, found in Streptomyces cyslabdanicus.